We begin with the raw amino-acid sequence, 330 residues long: Fructose-1,6-bisphosphatase class 1 (330 aa).

E78, D97, L99, and D100 together coordinate Mg(2+). Substrate is bound by residues 100–103 and N188; that span reads DGSS. A Mg(2+)-binding site is contributed by E260.

The protein belongs to the FBPase class 1 family. In terms of assembly, homotetramer. Mg(2+) is required as a cofactor.

It is found in the cytoplasm. It catalyses the reaction beta-D-fructose 1,6-bisphosphate + H2O = beta-D-fructose 6-phosphate + phosphate. It participates in carbohydrate biosynthesis; gluconeogenesis. The protein is Fructose-1,6-bisphosphatase class 1 of Paracoccus denitrificans (strain Pd 1222).